The primary structure comprises 232 residues: Large ribosomal subunit protein uL1 (232 aa).

It belongs to the universal ribosomal protein uL1 family. In terms of assembly, part of the 50S ribosomal subunit.

Functionally, binds directly to 23S rRNA. The L1 stalk is quite mobile in the ribosome, and is involved in E site tRNA release. In terms of biological role, protein L1 is also a translational repressor protein, it controls the translation of the L11 operon by binding to its mRNA. In Xanthobacter autotrophicus (strain ATCC BAA-1158 / Py2), this protein is Large ribosomal subunit protein uL1.